Here is a 351-residue protein sequence, read N- to C-terminus: c-di-GMP synthase (351 aa).

The protein belongs to the CD-NTase family. E05 subfamily.

It carries out the reaction 2 GTP = 3',3'-c-di-GMP + 2 diphosphate. In terms of biological role, cyclic nucleotide synthase (second messenger synthase) of a CBASS antivirus system. CBASS (cyclic oligonucleotide-based antiphage signaling system) provides immunity against bacteriophage. The CD-NTase protein synthesizes cyclic nucleotides in response to infection; these serve as specific second messenger signals. The signals activate a diverse range of effectors, leading to bacterial cell death and thus abortive phage infection. A type I-D(GG) CBASS system. Functionally, cyclic dinucleotide synthase that catalyzes the synthesis of c-di-GMP, has no activity with other NTP substrates. This Capnocytophaga granulosa (strain ATCC 51502 / DSM 11449 / JCM 8566 / LMG 16022 / NCTC 12948 / B0611) protein is c-di-GMP synthase (cdnE).